The primary structure comprises 67 residues: MNDVTVVNCPTCNKQVIWDELSTWRPFCSKRCQLIDLGEWAAEEKRIPSSGDLNDSDDWSEQPLDRQ.

Cys-9, Cys-12, Cys-28, and Cys-32 together coordinate Zn(2+). The segment at 46–67 (RIPSSGDLNDSDDWSEQPLDRQ) is disordered.

Belongs to the DNA gyrase inhibitor YacG family. Interacts with GyrB. The cofactor is Zn(2+).

In terms of biological role, inhibits all the catalytic activities of DNA gyrase by preventing its interaction with DNA. Acts by binding directly to the C-terminal domain of GyrB, which probably disrupts DNA binding by the gyrase. This Erwinia tasmaniensis (strain DSM 17950 / CFBP 7177 / CIP 109463 / NCPPB 4357 / Et1/99) protein is DNA gyrase inhibitor YacG.